The primary structure comprises 94 residues: Enhancer of yellow 2 transcription factor (94 aa).

This sequence belongs to the ENY2 family. Component of the nuclear pore complex (NPC)-associated AMEX complex (anchoring and mRNA export complex), composed of at least e(y)2 and xmas-2. Component of the SAGA transcription coactivator-HAT complexes, at least composed of Ada2b, e(y)2, Pcaf/Gcn5, Taf10 and Nipped-A/Trrap. Within the SAGA complex, e(y)2, Sgf11, and not/nonstop form an additional subcomplex of SAGA called the DUB module (deubiquitination module). Component of the THO complex, composed of at least e(y)2, HPR1, THO2, THOC5, THOC6 and THOC7. Interacts with e(y)1. Interacts with su(Hw) (via zinc fingers). Interacts with xmas-2; required for localization to the nuclear periphery. Interacts with the nuclear pore complex (NPC).

The protein resides in the nucleus. The protein localises to the nucleoplasm. Its subcellular location is the cytoplasm. Its function is as follows. Involved in mRNA export coupled transcription activation by association with both the AMEX and the SAGA complexes. The SAGA complex is a multiprotein complex that activates transcription by remodeling chromatin and mediating histone acetylation and deubiquitination. Within the SAGA complex, participates in a subcomplex that specifically deubiquitinates histone H2B. The SAGA complex is recruited to specific gene promoters by activators, where it is required for transcription. Required for nuclear receptor-mediated transactivation. Involved in transcription elongation by recruiting the THO complex onto nascent mRNA. The AMEX complex functions in docking export-competent ribonucleoprotein particles (mRNPs) to the nuclear entrance of the nuclear pore complex (nuclear basket). AMEX participates in mRNA export and accurate chromatin positioning in the nucleus by tethering genes to the nuclear periphery. This is Enhancer of yellow 2 transcription factor from Drosophila mojavensis (Fruit fly).